Consider the following 142-residue polypeptide: Putative pre-16S rRNA nuclease (142 aa).

Belongs to the YqgF nuclease family.

Its subcellular location is the cytoplasm. Its function is as follows. Could be a nuclease involved in processing of the 5'-end of pre-16S rRNA. In Saccharophagus degradans (strain 2-40 / ATCC 43961 / DSM 17024), this protein is Putative pre-16S rRNA nuclease.